A 396-amino-acid polypeptide reads, in one-letter code: Cysteine protease ATG4A (396 aa).

Residue cysteine 77 is the Nucleophile of the active site. Catalysis depends on residues aspartate 276 and histidine 278. Residues 390–393 (FEIL) carry the LIR motif.

Belongs to the peptidase C54 family. In terms of assembly, interacts with ATG9A; the interaction is direct.

Its subcellular location is the cytoplasm. It carries out the reaction [protein]-C-terminal L-amino acid-glycyl-phosphatidylethanolamide + H2O = [protein]-C-terminal L-amino acid-glycine + a 1,2-diacyl-sn-glycero-3-phosphoethanolamine. With respect to regulation, inhibited by N-ethylmaleimide. Redox-regulated during autophagy since reducing conditions activate ATG4A whereas an oxidizing environment such as the presence of H(2)O(2) inhibits its activity. Functionally, cysteine protease that plays a key role in autophagy by mediating both proteolytic activation and delipidation of ATG8 family proteins. The protease activity is required for proteolytic activation of ATG8 family proteins: cleaves the C-terminal amino acid of ATG8 proteins to reveal a C-terminal glycine. Exposure of the glycine at the C-terminus is essential for ATG8 proteins conjugation to phosphatidylethanolamine (PE) and insertion to membranes, which is necessary for autophagy. Preferred substrate is GABARAPL2 followed by MAP1LC3A and GABARAP. Protease activity is also required to counteract formation of high-molecular weight conjugates of ATG8 proteins (ATG8ylation): acts as a deubiquitinating-like enzyme that removes ATG8 conjugated to other proteins, such as ATG3. In addition to the protease activity, also mediates delipidation of ATG8 family proteins. Catalyzes delipidation of PE-conjugated forms of ATG8 proteins during macroautophagy. Compared to ATG4B, the major protein for proteolytic activation of ATG8 proteins, shows weaker ability to cleave the C-terminal amino acid of ATG8 proteins, while it displays stronger delipidation activity. Involved in phagophore growth during mitophagy independently of its protease activity and of ATG8 proteins: acts by regulating ATG9A trafficking to mitochondria and promoting phagophore-endoplasmic reticulum contacts during the lipid transfer phase of mitophagy. The sequence is that of Cysteine protease ATG4A from Mus musculus (Mouse).